The sequence spans 292 residues: DSC E3 ubiquitin ligase complex subunit 3 (292 aa).

The Extracellular portion of the chain corresponds to 1–243; it reads MSAEPLLPTH…PIANIKHNKD (243 aa). N-linked (GlcNAc...) asparagine glycosylation is found at Asn11, Asn41, Asn77, Asn99, and Asn145. A helical membrane pass occupies residues 244-264; that stretch reads LLLGICVGFFFGVFGILLMKF. The Cytoplasmic segment spans residues 265-273; that stretch reads DGLFNRRQK. The helical transmembrane segment at 274-291 threads the bilayer; sequence MAIFAGVIVNVMFCLVRG. Position 292 (Phe292) is a topological domain, extracellular.

The protein belongs to the dsc3 family. In terms of assembly, component of the DSC E3 ligase complexes composed of at least TUL1, DSC2, DSC3, UBX3, CDC48 as well as VLD1 for the vacuole-localized complex or GLD1 for the Golgi/endosome-localized complex.

The protein localises to the endoplasmic reticulum membrane. Component of the DSC E3 ubiquitin ligase complexes that tag proteins present in Golgi, endosome and vacuole membranes and function in protein homeostasis under non-stress conditions and support a role in protein quality control. Involved in endocytic protein trafficking. The sequence is that of DSC E3 ubiquitin ligase complex subunit 3 from Saccharomyces cerevisiae (strain ATCC 204508 / S288c) (Baker's yeast).